The following is a 195-amino-acid chain: Der GTPase-activating protein YihI (195 aa).

A disordered region spans residues 1–81 (MSRTKKTRRI…KAVVKEVKDP (81 aa)). Composition is skewed to basic and acidic residues over residues 9-23 (RITDIMPARKTDKPK), 38-49 (TRYELDAQAREE), and 66-81 (DPAEQKKAVVKEVKDP).

This sequence belongs to the YihI family. As to quaternary structure, interacts with Der.

A GTPase-activating protein (GAP) that modifies Der/EngA GTPase function. May play a role in ribosome biogenesis. The polypeptide is Der GTPase-activating protein YihI (Mannheimia haemolytica (Pasteurella haemolytica)).